The primary structure comprises 323 residues: Probable inactive poly [ADP-ribose] polymerase SRO2 (323 aa).

The 227-residue stretch at 31-257 (SSVSHAGSSF…FASRPSSPWV (227 aa)) folds into the PARP catalytic domain. Positions 250-321 (SRPSSPWVSF…IKNHKNRNKV (72 aa)) constitute an RST domain.

Interacts with STO.

The protein resides in the nucleus. Its function is as follows. Probable inactive ADP-ribosyltransferase that may be involved in stress and developmental responses. The chain is Probable inactive poly [ADP-ribose] polymerase SRO2 (SRO2) from Arabidopsis thaliana (Mouse-ear cress).